The chain runs to 363 residues: MNRHHLQDHFLEIDKKNCCVFRDDFIVKVLPPVLGLEFIFGLLGNGLALWIFCFHLKSWKSSRIFLFNLAVADFLLIICLPFLMDNYVRRWDWKFGDIPCRLMLFMLAMNRQGSIIFLTVVAVDRYFRVVHPHHALNKISNRTAAIISCLLWGITIGLTVHLLKKKMPIQNGGANLCSSFSICHTFQWHEAMFLLEFFLPLGIILFCSARIIWSLRQRQMDRHAKIKRAITFIMVVAIVFVICFLPSVVVRIRIFWLLHTSGTQNCEVYRSVDLAFFITLSFTYMNSMLDPVVYYFSSPSFPNFFSTLINRCLQRKMTGEPDNNRSTSVELTGDPNKTRGAPEALMANSGEPWSPSYLGPTSP.

Residues 1 to 33 lie on the Extracellular side of the membrane; sequence MNRHHLQDHFLEIDKKNCCVFRDDFIVKVLPPV. The chain crosses the membrane as a helical span at residues 34 to 54; it reads LGLEFIFGLLGNGLALWIFCF. Over 55 to 63 the chain is Cytoplasmic; sequence HLKSWKSSR. A helical membrane pass occupies residues 64–84; that stretch reads IFLFNLAVADFLLIICLPFLM. At 85 to 102 the chain is on the extracellular side; sequence DNYVRRWDWKFGDIPCRL. An intrachain disulfide couples Cys-100 to Cys-177. A helical transmembrane segment spans residues 103-123; that stretch reads MLFMLAMNRQGSIIFLTVVAV. Topologically, residues 124–142 are cytoplasmic; the sequence is DRYFRVVHPHHALNKISNR. The helical transmembrane segment at 143–163 threads the bilayer; it reads TAAIISCLLWGITIGLTVHLL. Residues 164 to 192 lie on the Extracellular side of the membrane; that stretch reads KKKMPIQNGGANLCSSFSICHTFQWHEAM. Residues 193-213 form a helical membrane-spanning segment; that stretch reads FLLEFFLPLGIILFCSARIIW. Over 214–229 the chain is Cytoplasmic; it reads SLRQRQMDRHAKIKRA. A helical transmembrane segment spans residues 230-250; it reads ITFIMVVAIVFVICFLPSVVV. The Extracellular portion of the chain corresponds to 251-273; the sequence is RIRIFWLLHTSGTQNCEVYRSVD. A helical membrane pass occupies residues 274–294; sequence LAFFITLSFTYMNSMLDPVVY. Over 295-363 the chain is Cytoplasmic; that stretch reads YFSSPSFPNF…SPSYLGPTSP (69 aa). The segment at 319-363 is disordered; that stretch reads GEPDNNRSTSVELTGDPNKTRGAPEALMANSGEPWSPSYLGPTSP. Ser-328 is modified (phosphoserine).

This sequence belongs to the G-protein coupled receptor 1 family. In terms of tissue distribution, expression largely restricted to adipose tissue and spleen. Expressed on mature neutrophils but not on immature neutrophils or eosinophils.

The protein localises to the cell membrane. Functionally, acts as a high affinity receptor for both nicotinic acid (also known as niacin) and (D)-beta-hydroxybutyrate and mediates increased adiponectin secretion and decreased lipolysis through G(i)-protein-mediated inhibition of adenylyl cyclase. This pharmacological effect requires nicotinic acid doses that are much higher than those provided by a normal diet. Mediates nicotinic acid-induced apoptosis in mature neutrophils. Receptor activation by nicotinic acid results in reduced cAMP levels which may affect activity of cAMP-dependent protein kinase A and phosphorylation of target proteins, leading to neutrophil apoptosis. The rank order of potency for the displacement of nicotinic acid binding is 5-methyl pyrazole-3-carboxylic acid = pyridine-3-acetic acid &gt; acifran &gt; 5-methyl nicotinic acid = acipimox &gt;&gt; nicotinuric acid = nicotinamide. This Homo sapiens (Human) protein is Hydroxycarboxylic acid receptor 2 (HCAR2).